The primary structure comprises 149 residues: Transcriptional repressor NrdR (149 aa).

The segment at 3 to 34 (CPFCSENDTKVIDSRLVADGHQVRRRRQCLAC) is a zinc-finger region. Residues 49-139 (PKVIKSNGNR…VYRSFEDIRE (91 aa)) form the ATP-cone domain.

It belongs to the NrdR family. Requires Zn(2+) as cofactor.

Functionally, negatively regulates transcription of bacterial ribonucleotide reductase nrd genes and operons by binding to NrdR-boxes. The polypeptide is Transcriptional repressor NrdR (Vibrio atlanticus (strain LGP32) (Vibrio splendidus (strain Mel32))).